Reading from the N-terminus, the 276-residue chain is Large ribosomal subunit protein uL2 (276 aa).

The disordered stretch occupies residues 211–276 (RNRHRGIRPQ…KLIISRRKGK (66 aa)). Residues 230–240 (DHPHGGGEGKK) are compositionally biased toward basic and acidic residues.

The protein belongs to the universal ribosomal protein uL2 family. In terms of assembly, part of the 50S ribosomal subunit. Forms a bridge to the 30S subunit in the 70S ribosome.

In terms of biological role, one of the primary rRNA binding proteins. Required for association of the 30S and 50S subunits to form the 70S ribosome, for tRNA binding and peptide bond formation. It has been suggested to have peptidyltransferase activity; this is somewhat controversial. Makes several contacts with the 16S rRNA in the 70S ribosome. This chain is Large ribosomal subunit protein uL2, found in Campylobacter jejuni subsp. doylei (strain ATCC BAA-1458 / RM4099 / 269.97).